The sequence spans 170 residues: Thialysine N-epsilon-acetyltransferase (170 aa).

The 163-residue stretch at 4-166 folds into the N-acetyltransferase domain; sequence TRIREARESD…FRFEGEAMRE (163 aa). 27 to 28 is a substrate binding site; the sequence is FE. Residue Lys29 is modified to N6-acetyllysine. Glu92 is a substrate binding site. Acetyl-CoA contacts are provided by residues 94–96, 102–107, 133–135, and Tyr140; these read IYV, GQGIGT, and NKK. The active-site Proton donor is the Tyr140. Glu152 contacts substrate.

It belongs to the acetyltransferase family. In terms of assembly, homodimer.

It localises to the cytoplasm. The enzyme catalyses S-(2-aminoethyl)-L-cysteine + acetyl-CoA = S-(2-acetamidoethyl)-L-cysteine + CoA + H(+). The catalysed reaction is an alkane-alpha,omega-diamine + acetyl-CoA = an N-acetylalkane-alpha,omega-diamine + CoA + H(+). Catalyzes the N-acetylation of the amino acid thialysine (S-(2-aminoethyl)-L-cysteine), a L-lysine analog with the 4-methylene group substituted with a sulfur. May also catalyze acetylation of polyamines, such as norspermidine, spermidine or spermine. However, ability to acetylate polyamines is weak, suggesting that it does not act as a diamine acetyltransferase in vivo. This Mus musculus (Mouse) protein is Thialysine N-epsilon-acetyltransferase.